Here is a 681-residue protein sequence, read N- to C-terminus: Angiomotin-like 2b (681 aa).

The span at 68 to 84 shows a compositional bias: low complexity; it reads GGGAASSSQSSSESLSQ. The interval 68 to 106 is disordered; it reads GGGAASSSQSSSESLSQDEPHSPQLSTRQEPQGQEHQVD. The span at 90-102 shows a compositional bias: polar residues; it reads PQLSTRQEPQGQE. Tyrosine 126 is modified (phosphotyrosine; by FGFR1). Coiled coils occupy residues 268-319, 362-441, and 481-508; these read NACS…LMKG, IEKL…LQAT, and VYTL…WEQK. The segment at 589–618 is disordered; the sequence is QLGALQPATADSSIISSHSTPAHTAQGKER. Polar residues predominate over residues 597 to 611; sequence TADSSIISSHSTPAH. Positions 678–681 match the PDZ-binding motif; sequence EIFI.

Belongs to the angiomotin family. As to quaternary structure, interacts with SRC. In terms of processing, phosphorylation at Tyr-126 is necessary for efficient binding to SRC and synergistically functioning with SRC to activate the downstream MAPK pathway. In terms of tissue distribution, expressed in endothelial cells.

It is found in the recycling endosome. The protein localises to the cytoplasm. Its subcellular location is the cell projection. The protein resides in the podosome. It localises to the cell junction. Required for proper architecture of actin filaments and for cell movements during embryogenesis. Plays a role in the radial actin fiber architecture in skin epithelial cells, thereby maintains cell geometry, size and cell interconnectivity within the skin. Plays an important role in coupling actin fibers to cell junctions in endothelial cells and is therefore required for correct endothelial cell morphology and maintenance of dorsal aorta lumen expansion during embryogenesis. May further play a role in the polarity, proliferation and migration of endothelial cells, and therefore participates in angiogenesis. May regulate the translocation of phosphorylated SRC to peripheral cell-matrix adhesion sites. This chain is Angiomotin-like 2b, found in Danio rerio (Zebrafish).